Reading from the N-terminus, the 281-residue chain is MNIVNTIKDVKLIIKKWKDENLSIGYVPTMGYLHEGHASLIKKAREENDKVIVSIFVNPIQFGPKEDYSTYPRDLVKDSSLCEKFGVDLIFNPETSEMYPNKIYSHINVDILTENLCGEKRPGHFQGVCTVLTKFFNILNPTKAYLGEKDAQQLAVVRKMVEDLNFPIEIIGCPIIREEDGLAKSSRNAYLNKQERKSALILNKSLKEALNALESGEKNSNNIRDIIVSKLNKEPLAKIDYVSIVDSITLQSVEKIQSSILVAIAVYIGKTRLIDNFTFKL.

ATP is bound at residue 30-37; sequence MGYLHEGH. Catalysis depends on histidine 37, which acts as the Proton donor. Glutamine 61 lines the (R)-pantoate pocket. Residue glutamine 61 coordinates beta-alanine. 147–150 is an ATP binding site; the sequence is GEKD. Glutamine 153 is a (R)-pantoate binding site. Residues isoleucine 176 and 184 to 187 contribute to the ATP site; that span reads KSSR.

The protein belongs to the pantothenate synthetase family. In terms of assembly, homodimer.

Its subcellular location is the cytoplasm. The enzyme catalyses (R)-pantoate + beta-alanine + ATP = (R)-pantothenate + AMP + diphosphate + H(+). The protein operates within cofactor biosynthesis; (R)-pantothenate biosynthesis; (R)-pantothenate from (R)-pantoate and beta-alanine: step 1/1. Its function is as follows. Catalyzes the condensation of pantoate with beta-alanine in an ATP-dependent reaction via a pantoyl-adenylate intermediate. The polypeptide is Pantothenate synthetase (Clostridium botulinum (strain Okra / Type B1)).